Consider the following 332-residue polypeptide: Solute carrier family 25 member 16 (332 aa).

Solcar repeat units lie at residues 34–120 (FYWL…YKTF), 128–216 (SGHV…LKSV), and 238–328 (LKTH…MKQF). Transmembrane regions (helical) follow at residues 37–57 (LRSFLAGGIAGCCAKTTVAPL), 88–108 (GYLGLYKGNGAMMIRIFPYGA), 134–154 (LMAGSMAGMTAVICTYPLDVV), 191–211 (GLMPTILGMAPYAGVSFFTFG), 244–264 (LLCGGVAGAIAQTISYPFDVT), and 299–319 (GLYRGLSLNYIRCIPSQAVAF).

It belongs to the mitochondrial carrier (TC 2.A.29) family.

It localises to the mitochondrion inner membrane. In terms of biological role, may be involved in the transport of coenzyme A in the mitochondrial matrix. Very little is known about the physiological function of this carrier. The polypeptide is Solute carrier family 25 member 16 (Mus musculus (Mouse)).